The following is a 22-amino-acid chain: Mu-conotoxin MIIIA (22 aa).

At Gln1 the chain carries Pyrrolidone carboxylic acid. Intrachain disulfides connect Cys3–Cys15, Cys4–Cys21, and Cys10–Cys22. Cys22 carries the post-translational modification Cysteine amide.

The protein belongs to the conotoxin M superfamily. In terms of tissue distribution, expressed by the venom duct.

The protein localises to the secreted. In terms of biological role, mu-conotoxins block voltage-gated sodium channels (Nav). This synthetic toxin potently blocks rNav1.3/SCN3A. It also moderately blocks rNav1.1/SCN1A, rNav1.2/SCN2A, rNav1.4/SCN4A, mNav1.6/SCN8A, and Nav1.7/SCN9A. sodium channels. This block is very slowly reversible. This Conus magus (Magical cone) protein is Mu-conotoxin MIIIA.